A 305-amino-acid polypeptide reads, in one-letter code: Oxygen-dependent coproporphyrinogen-III oxidase (305 aa).

Ser-92 contacts substrate. Positions 96 and 106 each coordinate a divalent metal cation. The active-site Proton donor is His-106. A substrate-binding site is contributed by 108-110; that stretch reads NVR. The a divalent metal cation site is built by His-145 and His-175. Residues 239-274 are important for dimerization; it reads YVEFNLLFDRGTLFGLQSGGRAESILISLPPLVRWE. 257 to 259 lines the substrate pocket; that stretch reads GGR.

Belongs to the aerobic coproporphyrinogen-III oxidase family. Homodimer. A divalent metal cation is required as a cofactor.

It is found in the cytoplasm. It carries out the reaction coproporphyrinogen III + O2 + 2 H(+) = protoporphyrinogen IX + 2 CO2 + 2 H2O. The protein operates within porphyrin-containing compound metabolism; protoporphyrin-IX biosynthesis; protoporphyrinogen-IX from coproporphyrinogen-III (O2 route): step 1/1. In terms of biological role, involved in the heme biosynthesis. Catalyzes the aerobic oxidative decarboxylation of propionate groups of rings A and B of coproporphyrinogen-III to yield the vinyl groups in protoporphyrinogen-IX. The sequence is that of Oxygen-dependent coproporphyrinogen-III oxidase from Xylella fastidiosa (strain Temecula1 / ATCC 700964).